The following is a 215-amino-acid chain: Cytochrome b6 (215 aa).

The chain crosses the membrane as a helical span at residues 32 to 52 (IFYCLGGITLTCFLVQVATGF). C35 lines the heme c pocket. Heme b is bound by residues H86 and H100. A run of 3 helical transmembrane segments spans residues 90 to 110 (ASMMVLMMILHVFRVYLTGGF), 116 to 136 (LTWVTGVVLAVLTASFGVTGY), and 186 to 206 (LHTFVLPLLTAVFMLMHFPMI). Heme b contacts are provided by H187 and H202.

Belongs to the cytochrome b family. PetB subfamily. The 4 large subunits of the cytochrome b6-f complex are cytochrome b6, subunit IV (17 kDa polypeptide, PetD), cytochrome f and the Rieske protein, while the 4 small subunits are PetG, PetL, PetM and PetN. The complex functions as a dimer. Heme b is required as a cofactor. Heme c serves as cofactor.

It localises to the plastid. The protein localises to the chloroplast thylakoid membrane. Functionally, component of the cytochrome b6-f complex, which mediates electron transfer between photosystem II (PSII) and photosystem I (PSI), cyclic electron flow around PSI, and state transitions. This is Cytochrome b6 from Helianthus annuus (Common sunflower).